The chain runs to 513 residues: Serine/threonine-protein kinase ppk8 (513 aa).

Over residues Leu-98 to Ser-114 the composition is skewed to low complexity. The disordered stretch occupies residues Leu-98–Asn-120. The Protein kinase domain maps to Gly-241–Met-505. ATP-binding positions include Ile-247 to Ile-255 and Lys-270. Asp-364 serves as the catalytic Proton acceptor.

Belongs to the protein kinase superfamily. Ser/Thr protein kinase family.

It localises to the cytoplasm. Its subcellular location is the nucleus. The enzyme catalyses L-seryl-[protein] + ATP = O-phospho-L-seryl-[protein] + ADP + H(+). The catalysed reaction is L-threonyl-[protein] + ATP = O-phospho-L-threonyl-[protein] + ADP + H(+). The chain is Serine/threonine-protein kinase ppk8 (ppk8) from Schizosaccharomyces pombe (strain 972 / ATCC 24843) (Fission yeast).